We begin with the raw amino-acid sequence, 493 residues long: Glutamate--tRNA ligase (493 aa).

Residues 10–20 carry the 'HIGH' region motif; it reads PSPTGFVHIGS. Positions 114, 116, 141, and 143 each coordinate Zn(2+). The 'KMSKS' region signature appears at 258–262; that stretch reads KLSKR. K261 lines the ATP pocket.

This sequence belongs to the class-I aminoacyl-tRNA synthetase family. Glutamate--tRNA ligase type 1 subfamily. Monomer. The cofactor is Zn(2+).

The protein resides in the cytoplasm. The catalysed reaction is tRNA(Glu) + L-glutamate + ATP = L-glutamyl-tRNA(Glu) + AMP + diphosphate. Its function is as follows. Catalyzes the attachment of glutamate to tRNA(Glu) in a two-step reaction: glutamate is first activated by ATP to form Glu-AMP and then transferred to the acceptor end of tRNA(Glu). This is Glutamate--tRNA ligase from Alkaliphilus metalliredigens (strain QYMF).